Reading from the N-terminus, the 479-residue chain is Long-chain alcohol oxidase (479 aa).

An FAD-binding PCMH-type domain is found at 14–183 (QILRPSAAYT…LAVRIRCREQ (170 aa)). A Pros-8alpha-FAD histidine modification is found at His-49. Residues Thr-113, Gly-116, 120–123 (TGTH), and Ile-173 contribute to the FAD site. The chain crosses the membrane as a helical span at residues 241-258 (LYWLGTMDYGLILQILFL). 2 residues coordinate FAD: Arg-369 and His-425.

Belongs to the oxygen-dependent FAD-linked oxidoreductase family. Requires FAD as cofactor.

It localises to the cell membrane. It carries out the reaction a long-chain primary fatty alcohol + O2 = a long-chain fatty aldehyde + H2O2. The enzyme catalyses dodecan-1-ol + O2 = dodecanal + H2O2. It catalyses the reaction tetradecan-1-ol + O2 = tetradecanal + H2O2. The catalysed reaction is octan-1-ol + O2 = octanal + H2O2. It carries out the reaction decan-1-ol + O2 = decanal + H2O2. It functions in the pathway lipid metabolism; fatty acid metabolism. In terms of biological role, in vitro catalyzes the oxidation of a range of fatty alcohols having a carbon chain length of six and above, with a reduction of O2 to H2O2. Shows the highest activity with 1-dodecanol. Is likely involved in lipid metabolism. The sequence is that of Long-chain alcohol oxidase from Uncultured marine euryarchaeote.